The chain runs to 640 residues: Threonine--tRNA ligase (640 aa).

The region spanning methionine 1 to threonine 59 is the TGS domain. The interval aspartate 240–proline 531 is catalytic. Zn(2+) is bound by residues cysteine 332, histidine 383, and histidine 508.

The protein belongs to the class-II aminoacyl-tRNA synthetase family. As to quaternary structure, homodimer. It depends on Zn(2+) as a cofactor.

It localises to the cytoplasm. It carries out the reaction tRNA(Thr) + L-threonine + ATP = L-threonyl-tRNA(Thr) + AMP + diphosphate + H(+). Catalyzes the attachment of threonine to tRNA(Thr) in a two-step reaction: L-threonine is first activated by ATP to form Thr-AMP and then transferred to the acceptor end of tRNA(Thr). Also edits incorrectly charged L-seryl-tRNA(Thr). The protein is Threonine--tRNA ligase of Thermotoga neapolitana (strain ATCC 49049 / DSM 4359 / NBRC 107923 / NS-E).